Reading from the N-terminus, the 305-residue chain is uncharacterized protein (305 aa).

A run of 10 helical transmembrane segments spans residues leucine 11–leucine 31, leucine 37–proline 57, isoleucine 70–leucine 90, leucine 97–leucine 117, valine 126–glycine 146, isoleucine 148–valine 168, isoleucine 180–tryptophan 200, leucine 217–glycine 237, valine 244–histidine 264, and glutamate 265–valine 285. 2 EamA domains span residues isoleucine 18–alanine 141 and valine 161–threonine 287.

It belongs to the EamA transporter family.

It localises to the cell membrane. This is an uncharacterized protein from Bacillus subtilis (strain 168).